The primary structure comprises 541 residues: Chaperonin GroEL 1 (541 aa).

ATP is bound by residues 29 to 32 (TLGP), 86 to 90 (DGTTT), glycine 413, 479 to 481 (NAA), and aspartate 495.

This sequence belongs to the chaperonin (HSP60) family. Forms a cylinder of 14 subunits composed of two heptameric rings stacked back-to-back. Interacts with the co-chaperonin GroES.

The protein localises to the cytoplasm. The catalysed reaction is ATP + H2O + a folded polypeptide = ADP + phosphate + an unfolded polypeptide.. Its function is as follows. Together with its co-chaperonin GroES, plays an essential role in assisting protein folding. The GroEL-GroES system forms a nano-cage that allows encapsulation of the non-native substrate proteins and provides a physical environment optimized to promote and accelerate protein folding. In Synechocystis sp. (strain ATCC 27184 / PCC 6803 / Kazusa), this protein is Chaperonin GroEL 1.